A 728-amino-acid polypeptide reads, in one-letter code: Catalase-peroxidase (728 aa).

A cross-link (tryptophyl-tyrosyl-methioninium (Trp-Tyr) (with M-244)) is located at residues 91–218; it reads WHSAGTYRTA…LAAVQMGLIY (128 aa). Catalysis depends on His-92, which acts as the Proton acceptor. Residues 218-244 constitute a cross-link (tryptophyl-tyrosyl-methioninium (Tyr-Met) (with W-91)); it reads YVNPEGPDGNPDPVAAARDIRDTFARM. Residue His-259 participates in heme b binding.

This sequence belongs to the peroxidase family. Peroxidase/catalase subfamily. Homodimer or homotetramer. Heme b is required as a cofactor. Formation of the three residue Trp-Tyr-Met cross-link is important for the catalase, but not the peroxidase activity of the enzyme.

It catalyses the reaction H2O2 + AH2 = A + 2 H2O. The enzyme catalyses 2 H2O2 = O2 + 2 H2O. Functionally, bifunctional enzyme with both catalase and broad-spectrum peroxidase activity. This Burkholderia mallei (strain NCTC 10247) protein is Catalase-peroxidase.